A 168-amino-acid chain; its full sequence is Myosin regulatory light chain 11 (168 aa).

Position 2 is a n,N,N-trimethylalanine (Ala-2). Phosphoserine is present on Ser-15. 3 EF-hand domains span residues 24 to 59 (TQIQ…MGRL), 94 to 129 (DPED…QCDR), and 130 to 165 (FTPE…GEDK). Ca(2+)-binding residues include Asp-37, Asn-39, Asp-41, and Asp-48.

Myosin is a hexamer of 2 heavy chains and 4 light chains. In terms of processing, the N-terminus is blocked. N,N,N-trimethylalanine, found in other myosin light chains would not have been detected in the N-terminal tryptic peptide in PubMed:7358336 because it would remain trimethylated and ninhydrin negative after hydrolysis.

Its function is as follows. Myosin regulatory subunit that plays an essential to maintain muscle integrity during early development. Plays a role in muscle contraction. This Gallus gallus (Chicken) protein is Myosin regulatory light chain 11 (MYL11).